The chain runs to 266 residues: UPF0294 protein YafD (266 aa).

Belongs to the UPF0294 family.

Its subcellular location is the cytoplasm. This Escherichia coli O157:H7 protein is UPF0294 protein YafD (yafD).